Here is a 920-residue protein sequence, read N- to C-terminus: MPVLGLDNITGRIMRAGEGRILRRLQRIAAQVNSLEEEFKALTDEELQALTPEFTRRHADGESLDDLLPEAFATMREAARRTLGMRHFDVQLMGGAALHFGNIAEMQTGEGKTLVGTLPVYLNALTGKGVHLVTVNDYLAERDAEWMGRAYRFLGLTVGVIKSQSTPAERRAQYACDITYGTNTEFGFDYLRDNMAWSQDELVQRGHHFAIVDEADSILIDEARTPLIISGPADQPTQWYGAFAKLVTRMRGVRVQEEQFVTPADKDRLAHLRTTHDYEYDPKKRTVAILDRGVEYLQDQLGIESLYESEHTSLIGHLNNALKAKEHFRKDKDYVVVDGEVLIVDEHTGRILAGRRYNEGLHQAIEAKEAEEGTEAGVTVRNENQTLATITLQNFFRLYEKLAGMTGTAMTEAAEFHQIYQLNVVPIPSNRPMIRRDDPDQIYRTEEAKYAAILADIAERHETGQPILVGTTSVEKSELLSGLLRKQGIRHEVLNAKNHQREAQIVAQAGRRGAVTVATNMAGRGTDIMLGGNPEAMALAALPEDATPEDREAVLDRVGRAAAAEHEEVKELGGLYVLGTERHESRRIDNQLRGRSGRQGDPGASRFYLSLGDDLMRLFRAQVVERVMSMANVPDDVPIENKMVTRAIASAQSQLEQQHFESRKDVLKFDEVLNRQRTLIYAERRRVLAGEDLREQVRHFMDDTIEAYIRQETGEGFPEEWDLERLWGAFRQLYPVGITIEDLEDSVGGRPDLTVDDLVAAVTEDVHDRYARREAELGADALRDLERLVVLSVLDRKWREHLYEMDYLRDGIGLRWTLGREPIVEYEREGFDMFGAMTEAIKEESVGYVFNLDATGREGEGSALDRRPTDGLHFSAPTLDTAEGVVEGRFTTAPAGEPAEHDKAPPHRPGKSRNRRRRKR.

ATP is bound by residues glutamine 91, 109 to 113 (GEGKT), and aspartate 527. The span at 859-870 (GEGSALDRRPTD) shows a compositional bias: basic and acidic residues. Positions 859–920 (GEGSALDRRP…KSRNRRRRKR (62 aa)) are disordered. Over residues 906–920 (PHRPGKSRNRRRRKR) the composition is skewed to basic residues.

It belongs to the SecA family. As to quaternary structure, monomer and homodimer. Part of the essential Sec protein translocation apparatus which comprises SecA, SecYEG and auxiliary proteins SecDF. Other proteins may also be involved.

Its subcellular location is the cell membrane. The protein resides in the cytoplasm. It carries out the reaction ATP + H2O + cellular proteinSide 1 = ADP + phosphate + cellular proteinSide 2.. In terms of biological role, part of the Sec protein translocase complex. Interacts with the SecYEG preprotein conducting channel. Has a central role in coupling the hydrolysis of ATP to the transfer of proteins into and across the cell membrane, serving as an ATP-driven molecular motor driving the stepwise translocation of polypeptide chains across the membrane. In Streptomyces avermitilis (strain ATCC 31267 / DSM 46492 / JCM 5070 / NBRC 14893 / NCIMB 12804 / NRRL 8165 / MA-4680), this protein is Protein translocase subunit SecA 2.